The chain runs to 399 residues: UDP-galactopyranose mutase (399 aa).

FAD contacts are provided by residues Ser25, 44 to 45 (EK), Asn52, and 71 to 72 (HI). The UDP-alpha-D-galactose site is built by Ser171, Trp175, Tyr200, Asn297, Arg306, and Tyr345. Residue Arg374 participates in FAD binding. Tyr380 is a binding site for UDP-alpha-D-galactose. 381 to 386 (IDMDRA) contacts FAD.

The protein belongs to the UDP-galactopyranose/dTDP-fucopyranose mutase family. It depends on FAD as a cofactor.

It carries out the reaction UDP-alpha-D-galactose = UDP-alpha-D-galactofuranose. Functionally, involved in the conversion of UDP-GalP into UDP-GalF through a 2-keto intermediate. This chain is UDP-galactopyranose mutase (glf), found in Mycoplasma pneumoniae (strain ATCC 29342 / M129 / Subtype 1) (Mycoplasmoides pneumoniae).